Reading from the N-terminus, the 302-residue chain is Actin maturation protease (302 aa).

The tract at residues M1–P26 is disordered. The tract at residues S85 to G205 is peptidase C39-like. Residue C93 is part of the active site.

This sequence belongs to the ACTMAP family.

It localises to the cytoplasm. The catalysed reaction is N-terminal N(alpha)-acetyl-L-methionyl-L-aspartyl-[protein] + H2O = N-terminal L-aspartyl-[protein] + N-acetyl-L-methionine. It catalyses the reaction N-terminal N(alpha)-acetyl-L-methionyl-L-glutamyl-[protein] + H2O = N-terminal L-glutamyl-[protein] + N-acetyl-L-methionine. The enzyme catalyses N-terminal N(alpha)-acetyl-L-cysteinyl-L-aspartyl-[protein] + H2O = N-terminal L-aspartyl-[protein] + N-acetyl-L-cysteine. It carries out the reaction N-terminal N(alpha)-acetyl-L-cysteinyl-L-glutamyl-[protein] + H2O = N-terminal L-glutamyl-[protein] + N-acetyl-L-cysteine. Its function is as follows. Actin maturation protease that specifically mediates the cleavage of immature acetylated N-terminal actin, thereby contributing to actin maturation. Cleaves N-terminal acetylated methionine of immature cytoplasmic beta- and gamma-actin after translation. Cleaves N-terminal acetylated cysteine of muscle alpha-actin after canonical removal of N-terminal methionine. The polypeptide is Actin maturation protease (Xenopus tropicalis (Western clawed frog)).